A 238-amino-acid chain; its full sequence is 2-C-methyl-D-erythritol 4-phosphate cytidylyltransferase (238 aa).

Belongs to the IspD/TarI cytidylyltransferase family. IspD subfamily.

It catalyses the reaction 2-C-methyl-D-erythritol 4-phosphate + CTP + H(+) = 4-CDP-2-C-methyl-D-erythritol + diphosphate. It participates in isoprenoid biosynthesis; isopentenyl diphosphate biosynthesis via DXP pathway; isopentenyl diphosphate from 1-deoxy-D-xylulose 5-phosphate: step 2/6. Functionally, catalyzes the formation of 4-diphosphocytidyl-2-C-methyl-D-erythritol from CTP and 2-C-methyl-D-erythritol 4-phosphate (MEP). In Paraburkholderia phytofirmans (strain DSM 17436 / LMG 22146 / PsJN) (Burkholderia phytofirmans), this protein is 2-C-methyl-D-erythritol 4-phosphate cytidylyltransferase.